A 220-amino-acid polypeptide reads, in one-letter code: GTP cyclohydrolase 1 (220 aa).

Zn(2+) is bound by residues Cys109, His112, and Cys180.

This sequence belongs to the GTP cyclohydrolase I family. Toroid-shaped homodecamer, composed of two pentamers of five dimers.

The enzyme catalyses GTP + H2O = 7,8-dihydroneopterin 3'-triphosphate + formate + H(+). It participates in cofactor biosynthesis; 7,8-dihydroneopterin triphosphate biosynthesis; 7,8-dihydroneopterin triphosphate from GTP: step 1/1. The polypeptide is GTP cyclohydrolase 1 (Yersinia pseudotuberculosis serotype O:1b (strain IP 31758)).